Here is a 154-residue protein sequence, read N- to C-terminus: MRLKLLWVGKTQESWVRTGIEEYAGRIRRYAPLEILEAREEKGAQAAAMRERECERLAKLIPKGGRLVLLDERGEAMTSPELASFLSKNRDQGTQDLVFAIGGAYGFTDAFRSQAFKSISLSRMTLTHQMVRVFLLEQIYRGFTIINGEPYHHE.

S-adenosyl-L-methionine contacts are provided by residues Leu-70, Gly-102, and 121–126; that span reads LSRMTL.

The protein belongs to the RNA methyltransferase RlmH family. Homodimer.

Its subcellular location is the cytoplasm. The enzyme catalyses pseudouridine(1915) in 23S rRNA + S-adenosyl-L-methionine = N(3)-methylpseudouridine(1915) in 23S rRNA + S-adenosyl-L-homocysteine + H(+). In terms of biological role, specifically methylates the pseudouridine at position 1915 (m3Psi1915) in 23S rRNA. The sequence is that of Ribosomal RNA large subunit methyltransferase H from Geobacter sp. (strain M21).